The primary structure comprises 204 residues: Outer-membrane lipoprotein carrier protein (204 aa).

The N-terminal stretch at 1–21 (MKKLLVACCVVSGMMSASVLA) is a signal peptide.

This sequence belongs to the LolA family. As to quaternary structure, monomer.

It localises to the periplasm. Its function is as follows. Participates in the translocation of lipoproteins from the inner membrane to the outer membrane. Only forms a complex with a lipoprotein if the residue after the N-terminal Cys is not an aspartate (The Asp acts as a targeting signal to indicate that the lipoprotein should stay in the inner membrane). This Edwardsiella ictaluri (strain 93-146) protein is Outer-membrane lipoprotein carrier protein.